A 318-amino-acid chain; its full sequence is GTP cyclohydrolase MptA (318 aa).

Belongs to the GTP cyclohydrolase IV family. As to quaternary structure, homodimer. Requires Fe(2+) as cofactor.

The enzyme catalyses GTP + H2O = 7,8-dihydroneopterin 2',3'-cyclic phosphate + formate + diphosphate + H(+). It participates in cofactor biosynthesis; 5,6,7,8-tetrahydromethanopterin biosynthesis. Converts GTP to 7,8-dihydro-D-neopterin 2',3'-cyclic phosphate, the first intermediate in the biosynthesis of coenzyme methanopterin. The sequence is that of GTP cyclohydrolase MptA from Methanothermobacter thermautotrophicus (strain ATCC 29096 / DSM 1053 / JCM 10044 / NBRC 100330 / Delta H) (Methanobacterium thermoautotrophicum).